The sequence spans 90 residues: Albumin (90 aa).

The residue at position 5 (Ser5) is a Phosphoserine. Positions 6 and 13 each coordinate Ca(2+). An Albumin domain is found at 25–90 (LLRHLVDEPQ…LVASTQAALA (66 aa)). Ser61 carries the phosphoserine modification. Thr62 and Thr64 each carry phosphothreonine. N6-methyllysine is present on Lys80.

The protein belongs to the ALB/AFP/VDB family. Interacts with FCGRT; this interaction regulates ALB homeostasis. Interacts with TASOR. In plasma, occurs in a covalently-linked complex with chromophore-bound alpha-1-microglobulin; this interaction does not prevent fatty acid binding to ALB. Plasma.

The protein resides in the secreted. In terms of biological role, binds water, Ca(2+), Na(+), K(+), fatty acids, hormones, bilirubin and drugs. Its main function is the regulation of the colloidal osmotic pressure of blood. Major zinc transporter in plasma, typically binds about 80% of all plasma zinc. Major calcium and magnesium transporter in plasma, binds approximately 45% of circulating calcium and magnesium in plasma. Potentially has more than two calcium-binding sites and might additionally bind calcium in a non-specific manner. The shared binding site between zinc and calcium suggests a crosstalk between zinc and calcium transport in the blood. The rank order of affinity is zinc &gt; calcium &gt; magnesium. Binds to the bacterial siderophore enterobactin and inhibits enterobactin-mediated iron uptake of E.coli from ferric transferrin, and may thereby limit the utilization of iron and growth of enteric bacteria such as E.coli. Does not prevent iron uptake by the bacterial siderophore aerobactin. This is Albumin from Capra hircus (Goat).